The primary structure comprises 502 residues: Nostrin (502 aa).

The region spanning 1 to 260 is the F-BAR domain; that stretch reads MRDPLTDCSY…AISKVDVEKD (260 aa). Serine 114 bears the Phosphoserine mark. Coiled-coil stretches lie at residues 160 to 230 and 305 to 335; these read SMTQ…LNQY and KLWR…SSAS. In terms of domain architecture, REM-1 spans 292 to 372; the sequence is PMDKERRKSL…SYKLSTVLAD (81 aa). The interval 413 to 437 is disordered; it reads KAESKAPAGEQNNPSSSRPGSSVSQ. The segment covering 423-437 has biased composition (low complexity); sequence QNNPSSSRPGSSVSQ. An SH3 domain is found at 438–497; the sequence is GNNQLCKALYTFQARQDDELNLEKGDIVTIHEKKEEGWWFGSLNGKKGHFPAAYVEELPP. Residue serine 479 is modified to Phosphoserine.

Homotrimer. Interacts with DAB2. Interacts with NOS3, WASL and CAV1. Interacts (via SH3 domain) with DNM2; this interaction allows the recruitment of NOS3 to dynamin-positive structures. As to expression, over-expressed in brain microcapillaries from spontaneously hypertensive rats.

It localises to the cell membrane. The protein localises to the cytoplasmic vesicle. The protein resides in the cytoplasm. It is found in the cytoskeleton. Its subcellular location is the nucleus. In terms of biological role, multivalent adapter protein which may decrease NOS3 activity by inducing its translocation away from the plasma membrane. This is Nostrin from Rattus norvegicus (Rat).